The chain runs to 748 residues: Polyribonucleotide nucleotidyltransferase (748 aa).

Positions 522 and 528 each coordinate Mg(2+). The KH domain maps to 588 to 647 (PRVTTIRVPVDKIGEVIGPKGKIINAITEETGAQISIEDDGTVFVGATDGPSAQAAIDRI). Residues 659-728 (GERFLGTVVK…KRGKISLVLV (70 aa)) enclose the S1 motif domain.

The protein belongs to the polyribonucleotide nucleotidyltransferase family. The cofactor is Mg(2+).

Its subcellular location is the cytoplasm. The enzyme catalyses RNA(n+1) + phosphate = RNA(n) + a ribonucleoside 5'-diphosphate. In terms of biological role, involved in mRNA degradation. Catalyzes the phosphorolysis of single-stranded polyribonucleotides processively in the 3'- to 5'-direction. The sequence is that of Polyribonucleotide nucleotidyltransferase from Mycobacterium avium (strain 104).